Reading from the N-terminus, the 431-residue chain is MGKNVVVLGTQWGDEGKGKIVDLLTQDAQVVVRYQGGHNAGHTLKINGVKTVLRLIPSGMLRPNVTCYIANGVVLSPQALLSEIKELEGNGINVRERLRISLACPLILPYHIALDKARETHMGKSAIGTTGRGIGPAYEDKVARRALRVGDLFHRDRFANKLTELLDYHNFVLTQYFKQPAVDLESLLGESLQWAEELRPMVCDVSACLHEHRKQGENILFEGAQGVYLDIDHGTYPYVTSSNTCVGSVINGAGFGPRYIDYVLGITKAYTTRVGGGPFPTELLDDVGKRIAERGQEFGAVTGRPRRCGWFDAVLLKRSIELNSISGLCVTKLDVLDGLEVLRIAVAYKDRDGNILSRPPLAADDFNDLLPVYEELPGWQESTADVTVMSDLPANARAYLKRIEEILGIPIDMLSTGPERDSTITLRGPFL.

Residues 13 to 19 and 41 to 43 contribute to the GTP site; these read GDEGKGK and GHT. The active-site Proton acceptor is aspartate 14. Residues aspartate 14 and glycine 41 each contribute to the Mg(2+) site. Residues 14–17, 39–42, threonine 130, arginine 144, glutamine 225, threonine 240, and arginine 304 contribute to the IMP site; these read DEGK and NAGH. Histidine 42 functions as the Proton donor in the catalytic mechanism. Residue 300 to 306 participates in substrate binding; the sequence is AVTGRPR. GTP-binding positions include arginine 306, 332–334, and 415–417; these read KLD and STG.

It belongs to the adenylosuccinate synthetase family. Homodimer. It depends on Mg(2+) as a cofactor.

The protein resides in the cytoplasm. It carries out the reaction IMP + L-aspartate + GTP = N(6)-(1,2-dicarboxyethyl)-AMP + GDP + phosphate + 2 H(+). It participates in purine metabolism; AMP biosynthesis via de novo pathway; AMP from IMP: step 1/2. Its function is as follows. Plays an important role in the de novo pathway of purine nucleotide biosynthesis. Catalyzes the first committed step in the biosynthesis of AMP from IMP. The chain is Adenylosuccinate synthetase from Legionella pneumophila subsp. pneumophila (strain Philadelphia 1 / ATCC 33152 / DSM 7513).